An 813-amino-acid polypeptide reads, in one-letter code: LPS-assembly protein LptD (813 aa).

An N-terminal signal peptide occupies residues 1 to 22 (MRRALRLLPLPLSIAICLPAMA).

The protein belongs to the LptD family. In terms of assembly, component of the lipopolysaccharide transport and assembly complex. Interacts with LptE and LptA.

It is found in the cell outer membrane. Its function is as follows. Together with LptE, is involved in the assembly of lipopolysaccharide (LPS) at the surface of the outer membrane. The protein is LPS-assembly protein LptD of Xanthomonas oryzae pv. oryzae (strain MAFF 311018).